A 220-amino-acid chain; its full sequence is uncharacterized protein (220 aa).

The first 25 residues, 1 to 25 (MSCGTYKRGSLTFLLVVALAVPVFC), serve as a signal peptide directing secretion.

In terms of tissue distribution, nacreous layer of shell (at protein level). Expressed primarily in the mantle with highest level in the mantle pallium and lower level in the mantle edge.

The protein resides in the secreted. This is an uncharacterized protein from Margaritifera margaritifera (Freshwater pearl mussel).